A 490-amino-acid chain; its full sequence is Probable cytosol aminopeptidase (490 aa).

The Mn(2+) site is built by K262 and D267. The active site involves K274. Positions 285, 344, and 346 each coordinate Mn(2+). R348 is a catalytic residue.

Belongs to the peptidase M17 family. It depends on Mn(2+) as a cofactor.

The protein resides in the cytoplasm. It catalyses the reaction Release of an N-terminal amino acid, Xaa-|-Yaa-, in which Xaa is preferably Leu, but may be other amino acids including Pro although not Arg or Lys, and Yaa may be Pro. Amino acid amides and methyl esters are also readily hydrolyzed, but rates on arylamides are exceedingly low.. The enzyme catalyses Release of an N-terminal amino acid, preferentially leucine, but not glutamic or aspartic acids.. Its function is as follows. Presumably involved in the processing and regular turnover of intracellular proteins. Catalyzes the removal of unsubstituted N-terminal amino acids from various peptides. The chain is Probable cytosol aminopeptidase from Xanthomonas oryzae pv. oryzae (strain MAFF 311018).